Reading from the N-terminus, the 642-residue chain is MPVITLPDGSQRHFDHPVSVMDIARDIGPGLAKACIAGRVNGELVDACDLIDADATVAIITAKDQEGVDILRHSCAHLLGHAIKQLWPQTKMAIGPVIDNGFYYDVDLDHTLTQEDLERLDKRMHELAEKDYDVIKKKVSWQEARDAFVARDELYKVAILDENISHDDRPGLYHHEEYLDMCRGPHVPNMRFCHHFKLQKSSGAYWRGDSDNKMLQRIYGTAWADKKQLNAYLQRLEEAAKRDHRKIGKQLDLYHMQEEAPGMVFWHNDGWTIFRELEAFVRMKLKEYQYQEVKGPFMMDRVLWEKTGHWENYKDAMFTTSSENREYCIKPMNCPGHVQIFNQGLKSYRDLPLRMAEFGSCHRNEPSGSLHGLMRVRGFTQDDAHIFCTEEQIRDEVNSCIKMVYDMYSTFGFEKIVVKLSTRPEKRIGSDEIWDRAEEDLAAALQENGIPFEYQPGEGAFYGPKIEFTLHDCLDRAWQCGTVQLDFSLPGRLSASYVGENNERVVPVMIHRAILGSMERFIGILTEEFAGFFPTWLAPVQAVVMNITDSQAEYVEELSKKLQAAGIRVKSDLRNEKIGFKIREHTLRRVPYMLVCGDKEVEAGKVAVRTRRGKDLGVMSIDDVIKKLQQEIRSRSLHQLEE.

The 61-residue stretch at 1 to 61 folds into the TGS domain; the sequence is MPVITLPDGS…DADATVAIIT (61 aa). The segment at 243 to 534 is catalytic; it reads DHRKIGKQLD…LTEEFAGFFP (292 aa). Zn(2+)-binding residues include Cys334, His385, and His511.

It belongs to the class-II aminoacyl-tRNA synthetase family. As to quaternary structure, homodimer. Zn(2+) serves as cofactor.

It localises to the cytoplasm. It carries out the reaction tRNA(Thr) + L-threonine + ATP = L-threonyl-tRNA(Thr) + AMP + diphosphate + H(+). Its function is as follows. Catalyzes the attachment of threonine to tRNA(Thr) in a two-step reaction: L-threonine is first activated by ATP to form Thr-AMP and then transferred to the acceptor end of tRNA(Thr). Also edits incorrectly charged L-seryl-tRNA(Thr). The sequence is that of Threonine--tRNA ligase from Edwardsiella ictaluri (strain 93-146).